Reading from the N-terminus, the 347-residue chain is NADH-ubiquinone oxidoreductase chain 2 (347 aa).

11 consecutive transmembrane segments (helical) span residues 3 to 23 (PMTF…VLLS), 25 to 45 (HWFM…PVLM), 59 to 79 (YFLT…INTM), 96 to 116 (ILIT…FWVP), 127 to 147 (GLIL…QIYP), 149 to 169 (LNTN…GWGG), 178 to 198 (IMAY…TYNP), 201 to 221 (SLLN…LLII), 239 to 259 (IVTT…PLTG), 274 to 294 (NSLI…FFYM), and 326 to 346 (TAPL…LITL).

The protein belongs to the complex I subunit 2 family. As to quaternary structure, core subunit of respiratory chain NADH dehydrogenase (Complex I) which is composed of 45 different subunits. Interacts with TMEM242.

The protein resides in the mitochondrion inner membrane. It carries out the reaction a ubiquinone + NADH + 5 H(+)(in) = a ubiquinol + NAD(+) + 4 H(+)(out). Core subunit of the mitochondrial membrane respiratory chain NADH dehydrogenase (Complex I) which catalyzes electron transfer from NADH through the respiratory chain, using ubiquinone as an electron acceptor. Essential for the catalytic activity and assembly of complex I. The sequence is that of NADH-ubiquinone oxidoreductase chain 2 from Sylvisorex ollula (Greater forest shrew).